The sequence spans 54 residues: Large ribosomal subunit protein bL33 (54 aa).

This sequence belongs to the bacterial ribosomal protein bL33 family.

The protein is Large ribosomal subunit protein bL33 of Herpetosiphon aurantiacus (strain ATCC 23779 / DSM 785 / 114-95).